Consider the following 338-residue polypeptide: Pyridoxal 5'-phosphate synthase subunit PdxS (338 aa).

Residue Asp-66 participates in D-ribose 5-phosphate binding. Catalysis depends on Lys-123, which acts as the Schiff-base intermediate with D-ribose 5-phosphate. Residue Gly-195 coordinates D-ribose 5-phosphate. Lys-207 lines the D-glyceraldehyde 3-phosphate pocket. D-ribose 5-phosphate is bound by residues Gly-256 and 277-278 (GS).

Belongs to the PdxS/SNZ family. In the presence of PdxT, forms a dodecamer of heterodimers.

It carries out the reaction aldehydo-D-ribose 5-phosphate + D-glyceraldehyde 3-phosphate + L-glutamine = pyridoxal 5'-phosphate + L-glutamate + phosphate + 3 H2O + H(+). Its pathway is cofactor biosynthesis; pyridoxal 5'-phosphate biosynthesis. Functionally, catalyzes the formation of pyridoxal 5'-phosphate from ribose 5-phosphate (RBP), glyceraldehyde 3-phosphate (G3P) and ammonia. The ammonia is provided by the PdxT subunit. Can also use ribulose 5-phosphate and dihydroxyacetone phosphate as substrates, resulting from enzyme-catalyzed isomerization of RBP and G3P, respectively. This is Pyridoxal 5'-phosphate synthase subunit PdxS from Saccharolobus islandicus (strain L.S.2.15 / Lassen #1) (Sulfolobus islandicus).